We begin with the raw amino-acid sequence, 309 residues long: Protein FdhE homolog (309 aa).

It belongs to the FdhE family.

It is found in the cytoplasm. In terms of biological role, necessary for formate dehydrogenase activity. The protein is Protein FdhE homolog of Pseudomonas aeruginosa (strain ATCC 15692 / DSM 22644 / CIP 104116 / JCM 14847 / LMG 12228 / 1C / PRS 101 / PAO1).